The sequence spans 220 residues: Serine protease-like protein 51 (220 aa).

The first 16 residues, 1 to 16 (MFQLLIPLLLALKGHA), serve as a signal peptide directing secretion. Residues 23 to 220 (VQCGHRPAFP…SSKWVSSVGA (198 aa)) form the Peptidase S1 domain. A glycan (N-linked (GlcNAc...) asparagine) is linked at asparagine 33. Cysteine 64 and cysteine 80 are oxidised to a cystine. Asparagine 92 carries N-linked (GlcNAc...) asparagine glycosylation. An intrachain disulfide couples cysteine 157 to cysteine 170.

This sequence belongs to the peptidase S1 family.

Its subcellular location is the secreted. The chain is Serine protease-like protein 51 from Homo sapiens (Human).